Reading from the N-terminus, the 185-residue chain is Threonylcarbamoyl-AMP synthase (185 aa).

The region spanning 1-185 is the YrdC-like domain; that stretch reads MKNLNQVVDA…AKTGNTLRQG (185 aa).

This sequence belongs to the SUA5 family. TsaC subfamily.

The protein resides in the cytoplasm. The enzyme catalyses L-threonine + hydrogencarbonate + ATP = L-threonylcarbamoyladenylate + diphosphate + H2O. Required for the formation of a threonylcarbamoyl group on adenosine at position 37 (t(6)A37) in tRNAs that read codons beginning with adenine. Catalyzes the conversion of L-threonine, HCO(3)(-)/CO(2) and ATP to give threonylcarbamoyl-AMP (TC-AMP) as the acyladenylate intermediate, with the release of diphosphate. This Aliivibrio fischeri (strain ATCC 700601 / ES114) (Vibrio fischeri) protein is Threonylcarbamoyl-AMP synthase.